Reading from the N-terminus, the 132-residue chain is uncharacterized protein (132 aa).

This is an uncharacterized protein from Escherichia coli.